Reading from the N-terminus, the 310-residue chain is Dihydroorotate dehydrogenase B (NAD(+)), catalytic subunit (310 aa).

FMN contacts are provided by residues serine 19 and 43–44 (KA). Substrate-binding positions include lysine 43 and 67 to 71 (NAIGL). Positions 97 and 125 each coordinate FMN. Residue asparagine 125 coordinates substrate. Residue cysteine 128 is the Nucleophile of the active site. FMN-binding residues include lysine 163 and isoleucine 189. Substrate is bound at residue 190-191 (NT). FMN contacts are provided by residues glycine 215, 241–242 (GG), and 263–264 (GT).

The protein belongs to the dihydroorotate dehydrogenase family. Type 1 subfamily. Heterotetramer of 2 PyrK and 2 PyrD type B subunits. FMN serves as cofactor.

It localises to the cytoplasm. The catalysed reaction is (S)-dihydroorotate + NAD(+) = orotate + NADH + H(+). Its pathway is pyrimidine metabolism; UMP biosynthesis via de novo pathway; orotate from (S)-dihydroorotate (NAD(+) route): step 1/1. Functionally, catalyzes the conversion of dihydroorotate to orotate with NAD(+) as electron acceptor. This is Dihydroorotate dehydrogenase B (NAD(+)), catalytic subunit (pyrD) from Bacillus pumilus (strain SAFR-032).